We begin with the raw amino-acid sequence, 338 residues long: LIX1-like protein (338 aa).

Residues methionine 1–proline 65 are disordered. Residues threonine 29–proline 38 show a composition bias toward low complexity. Residues proline 39–leucine 56 are compositionally biased toward pro residues.

This sequence belongs to the LIX1 family.

The chain is LIX1-like protein (Lix1l) from Rattus norvegicus (Rat).